A 431-amino-acid polypeptide reads, in one-letter code: MLERLSWKRLVLELLLCCLPAFILGAFFGYLPWFLLASVTGLLIWHFWNLLRLSWWLWVDRSMTPPPGRGSWEPLLYGLHQMQLRNKKRRRELGNLIKRFRSGAESLPDAVVLTTEEGGIFWCNGLAQQILGLRWPEDNGQNILNLLRYPEFTQYLKTRDFSRPLNLVLNTGRHLEIRVMPYTHKQLLMVARDVTQMHQLEGARRNFFANVSHELRTPLTVLQGYLEMMNEQPLEGAVREKALHTMREQTQRMEGLVKQLLTLSKIEAAPTHLLNEKVDVPMMLRVVEREAQTLSQKKQTFTFEIDNGLKVSGNEDQLRSAISNLVYNAVNHTPEGTHITVRWQRVPHGAEFSVEDNGPGIAPEHIPRLTERFYRVDKARSRQTGGSGLGLAIVKHAVNHHESRLNIESTVGKGTRFSFVIPERLIAKNSD.

Topologically, residues 1-9 (MLERLSWKR) are cytoplasmic. The helical transmembrane segment at 10 to 28 (LVLELLLCCLPAFILGAFF) threads the bilayer. Over 29–32 (GYLP) the chain is Periplasmic. A helical membrane pass occupies residues 33–51 (WFLLASVTGLLIWHFWNLL). Over 52-431 (RLSWWLWVDR…PERLIAKNSD (380 aa)) the chain is Cytoplasmic. The 77-residue stretch at 96–172 (LIKRFRSGAE…RPLNLVLNTG (77 aa)) folds into the PAS domain. The Histidine kinase domain maps to 210–425 (NVSHELRTPL…RFSFVIPERL (216 aa)). His213 carries the post-translational modification Phosphohistidine; by autocatalysis.

Its subcellular location is the cell inner membrane. The enzyme catalyses ATP + protein L-histidine = ADP + protein N-phospho-L-histidine.. Member of the two-component regulatory system PhoR/PhoB involved in the phosphate regulon genes expression. PhoR may function as a membrane-associated protein kinase that phosphorylates PhoB in response to environmental signals. This Escherichia coli (strain K12) protein is Phosphate regulon sensor protein PhoR (phoR).